The sequence spans 199 residues: Putative 3-methyladenine DNA glycosylase (199 aa).

Belongs to the DNA glycosylase MPG family.

The chain is Putative 3-methyladenine DNA glycosylase from Rhizobium etli (strain ATCC 51251 / DSM 11541 / JCM 21823 / NBRC 15573 / CFN 42).